Reading from the N-terminus, the 257-residue chain is Acetylglutamate kinase (257 aa).

Residues Gly43 to Gly44, Arg65, and Asn157 each bind substrate. ATP contacts are provided by residues Asp180 to Leu185 and Ile208 to Thr210.

This sequence belongs to the acetylglutamate kinase family. ArgB subfamily. As to quaternary structure, homodimer.

The protein resides in the cytoplasm. It catalyses the reaction N-acetyl-L-glutamate + ATP = N-acetyl-L-glutamyl 5-phosphate + ADP. It functions in the pathway amino-acid biosynthesis; L-arginine biosynthesis; N(2)-acetyl-L-ornithine from L-glutamate: step 2/4. Its function is as follows. Catalyzes the ATP-dependent phosphorylation of N-acetyl-L-glutamate. This is Acetylglutamate kinase from Salmonella agona (strain SL483).